Consider the following 423-residue polypeptide: UDP-N-acetylglucosamine 1-carboxyvinyltransferase 2 (423 aa).

23 to 24 lines the phosphoenolpyruvate pocket; it reads KN. R96 lines the UDP-N-acetyl-alpha-D-glucosamine pocket. The active-site Proton donor is the C120. C120 is subject to 2-(S-cysteinyl)pyruvic acid O-phosphothioketal. UDP-N-acetyl-alpha-D-glucosamine contacts are provided by residues 125–129, D309, and V331; that span reads RPIDL.

It belongs to the EPSP synthase family. MurA subfamily.

The protein resides in the cytoplasm. The enzyme catalyses phosphoenolpyruvate + UDP-N-acetyl-alpha-D-glucosamine = UDP-N-acetyl-3-O-(1-carboxyvinyl)-alpha-D-glucosamine + phosphate. The protein operates within cell wall biogenesis; peptidoglycan biosynthesis. Its function is as follows. Cell wall formation. Adds enolpyruvyl to UDP-N-acetylglucosamine. This is UDP-N-acetylglucosamine 1-carboxyvinyltransferase 2 from Streptococcus agalactiae serotype Ia (strain ATCC 27591 / A909 / CDC SS700).